Here is a 349-residue protein sequence, read N- to C-terminus: MGRKKIQISRILDQRNRQVTFTKRKFGLMKKAYELSVLCDCDIALIIFNSAQRLFQYASSDMDRVLLKYTEYSEPHESRTNADILQTLKRRGVGLDGPELDMEEGPEGPGEKLLRTLGGDRGSASPRPRIYPVAPAMSVSELSYRVPPATPGCDPGGLGEVPSVHSRPAYFRPPGLGHPIFSPSHLASKTPPPLYLATDGRRPDLPPGLVGARGGLGTSRSLYSGLQSPGAPGPALGSFAFLPSGSTDCSPGDAAQGPLQPSPWPPTRDAVDPARPVARSLCKEGPPSRGASPPTPPVSIKSERLSPVTGTSGDFPRSFPYPLLLARPLAEPLRPSASLHRLTPDSWPR.

Positions 3–57 (RKKIQISRILDQRNRQVTFTKRKFGLMKKAYELSVLCDCDIALIIFNSAQRLFQY) constitute an MADS-box domain. Residues 58 to 86 (ASSDMDRVLLKYTEYSEPHESRTNADILQ) constitute a DNA-binding region (mef2-type). Disordered regions lie at residues 237–317 (GSFA…DFPR) and 330–349 (AEPL…SWPR).

Belongs to the MEF2 family. In terms of assembly, heterodimer. Interacts with HDAC9. Interacts with HDAC7. In terms of tissue distribution, highest expression found in embryonic heart and skeletal muscle. Low levels found in adult spleen, lung and testis while no expression is found in adult heart, brain or skeletal muscle.

It localises to the nucleus. Functionally, transcriptional activator which binds specifically to the MEF2 element, 5'-YTA[AT](4)TAR-3', found in numerous muscle-specific genes. Activates transcription via this element. May be involved in muscle-specific and/or growth factor-related transcription. This Mus musculus (Mouse) protein is Myocyte-specific enhancer factor 2B (Mef2b).